The primary structure comprises 741 residues: Mitofusin-1 (741 aa).

Over methionine 1 to leucine 584 the chain is Cytoplasmic. The part of a helix bundle domain, formed by helices from N-terminal and C-terminal regions stretch occupies residues lysine 9–arginine 73. The Dynamin-type G domain occupies serine 72–glutamate 321. The G1 motif stretch occupies residues glycine 82–serine 89. Serine 85–serine 90 is a binding site for GTP. The segment at isoleucine 108–threonine 109 is G2 motif. A G3 motif region spans residues aspartate 178–glycine 181. Asparagine 237–aspartate 240 contributes to the GTP binding site. The interval asparagine 237–aspartate 240 is G4 motif. Residue glutamate 266 is a region of interest, G5 motif. Serine 284 and lysine 286 together coordinate GTP. Residues glutamate 338 to aspartate 364 are part of a helix bundle domain, formed by helices from N-terminal and C-terminal regions. Residues glutamate 371–lysine 408 are a coiled coil. The helical transmembrane segment at valine 585–valine 605 threads the bilayer. Residues isoleucine 606–lysine 608 are Mitochondrial intermembrane-facing. Residues threonine 609–glutamate 629 traverse the membrane as a helical segment. At arginine 630 to serine 741 the chain is on the cytoplasmic side. Positions arginine 679–leucine 734 form a coiled coil. The segment at aspartate 703–leucine 734 is part of a helix bundle domain, formed by helices from N-terminal and C-terminal regions.

Belongs to the TRAFAC class dynamin-like GTPase superfamily. Dynamin/Fzo/YdjA family. Mitofusin subfamily. In terms of assembly, homodimer, also in the absence of bound GTP. Forms higher oligomers in the presence of a transition state GTP analog. Forms homomultimers and heteromultimers with MFN2. Oligomerization is essential for mitochondrion fusion. Component of a high molecular weight multiprotein complex. Interacts with VAT1. Interacts with THG1L; THG1L probably functions as a guanyl-nucleotide exchange factor/GEF, activating MFN1. Ubiquitinated by non-degradative ubiquitin by PRKN. Deubiquitination by USP30 inhibits mitochondrial fusion. Ubiquitinated by MARCHF5. When mitochondria are depolarized and dysfunctional, it is ubiquitinated by a SCF (SKP1-CUL1-F-box protein) E3 ubiquitin-protein ligase complex that contains FBXO7 and PRKN. Detected in kidney and heart (at protein level). Ubiquitous. Expressed at slightly higher level in kidney and heart. Isoform 2 may be overexpressed in some tumors, such as lung cancers.

The protein localises to the mitochondrion outer membrane. Its subcellular location is the cytoplasm. It catalyses the reaction GTP + H2O = GDP + phosphate + H(+). Functionally, mitochondrial outer membrane GTPase that mediates mitochondrial clustering and fusion. Membrane clustering requires GTPase activity. It may involve a major rearrangement of the coiled coil domains. Mitochondria are highly dynamic organelles, and their morphology is determined by the equilibrium between mitochondrial fusion and fission events. Overexpression induces the formation of mitochondrial networks (in vitro). Has low GTPase activity. The sequence is that of Mitofusin-1 (MFN1) from Homo sapiens (Human).